We begin with the raw amino-acid sequence, 474 residues long: Proline--tRNA ligase (474 aa).

This sequence belongs to the class-II aminoacyl-tRNA synthetase family. ProS type 3 subfamily. In terms of assembly, homodimer.

Its subcellular location is the cytoplasm. The catalysed reaction is tRNA(Pro) + L-proline + ATP = L-prolyl-tRNA(Pro) + AMP + diphosphate. Its function is as follows. Catalyzes the attachment of proline to tRNA(Pro) in a two-step reaction: proline is first activated by ATP to form Pro-AMP and then transferred to the acceptor end of tRNA(Pro). The chain is Proline--tRNA ligase from Aster yellows witches'-broom phytoplasma (strain AYWB).